A 158-amino-acid polypeptide reads, in one-letter code: Glutathione peroxidase homolog BsaA (158 aa).

Cys-36 is an active-site residue.

Belongs to the glutathione peroxidase family.

This Staphylococcus epidermidis (strain ATCC 12228 / FDA PCI 1200) protein is Glutathione peroxidase homolog BsaA (bsaA).